The sequence spans 224 residues: uncharacterized protein (224 aa).

The next 4 membrane-spanning stretches (helical) occupy residues 39–59 (LICL…FYSI), 70–90 (YLSL…ILFA), 103–123 (VFVF…IGAI), and 139–159 (MHIG…FLIT).

The protein resides in the membrane. This is an uncharacterized protein from Dictyostelium discoideum (Social amoeba).